We begin with the raw amino-acid sequence, 823 residues long: Putative ankyrin repeat domain-containing protein 20A4 (823 aa).

ANK repeat units lie at residues Gln66 to Val95, Glu99 to Leu128, Tyr132 to Ala161, Asp165 to Ala194, and Leu198 to Ala227. Disordered stretches follow at residues Val301 to Asp343 and Gln356 to Asp405. Over residues Glu371–Gln384 the composition is skewed to basic and acidic residues. 3 coiled-coil regions span residues Lys431 to Glu480, Glu565 to Thr724, and Phe776 to Val806.

The chain is Putative ankyrin repeat domain-containing protein 20A4 from Homo sapiens (Human).